The sequence spans 159 residues: Transcription elongation factor A protein-like 1 (159 aa).

Positions Met1 to Asn121 are disordered. Residues Lys17–Pro34 are compositionally biased toward basic and acidic residues. Acidic residues predominate over residues Gln37 to Leu54. Composition is skewed to basic and acidic residues over residues Ser64–Glu80 and His95–Gly119.

It belongs to the TFS-II family. TFA subfamily.

The protein localises to the nucleus. May be involved in transcriptional regulation. Modulates various viral and cellular promoters in a promoter context-dependent manner. Does not bind DNA directly. This chain is Transcription elongation factor A protein-like 1, found in Gorilla gorilla gorilla (Western lowland gorilla).